Consider the following 83-residue polypeptide: Acyl carrier protein (83 aa).

Positions 2 to 77 constitute a Carrier domain; sequence NEILSKIKSI…DANQYIKKYL (76 aa). Residue serine 37 is modified to O-(pantetheine 4'-phosphoryl)serine.

Belongs to the acyl carrier protein (ACP) family. 4'-phosphopantetheine is transferred from CoA to a specific serine of apo-ACP by AcpS. This modification is essential for activity because fatty acids are bound in thioester linkage to the sulfhydryl of the prosthetic group.

Its subcellular location is the cytoplasm. Its pathway is lipid metabolism; fatty acid biosynthesis. Functionally, carrier of the growing fatty acid chain in fatty acid biosynthesis. This Karelsulcia muelleri (strain GWSS) (Sulcia muelleri) protein is Acyl carrier protein.